The sequence spans 141 residues: Large ribosomal subunit protein uL11 (141 aa).

The protein belongs to the universal ribosomal protein uL11 family. Part of the ribosomal stalk of the 50S ribosomal subunit. Interacts with L10 and the large rRNA to form the base of the stalk. L10 forms an elongated spine to which L12 dimers bind in a sequential fashion forming a multimeric L10(L12)X complex. Post-translationally, one or more lysine residues are methylated.

Forms part of the ribosomal stalk which helps the ribosome interact with GTP-bound translation factors. This chain is Large ribosomal subunit protein uL11, found in Natranaerobius thermophilus (strain ATCC BAA-1301 / DSM 18059 / JW/NM-WN-LF).